Consider the following 495-residue polypeptide: MVSIEAMKDSNWDLQIQVFRRRLNPEVIEARNEIFLSLPSDHGLITLVINKDKPFQISVLLEKNQEFMQTAMNKYVETAFQNQKTTLTSLFNYLLQNWKSFETCNTKERELMVQQVDSKKPETPTDLEPLANKLEGPLSERVHLNTTLDYEVLRGQNHCQKQNTTQTKTTISGSEQLFNDEKPKKIIYSKGGNDGKEDDLQNVNEPQDAYSNDHDIQSKDTELLGNEYCLEWKNPHLTNVGTLKAPILRLVIKCVRCHYGSEISIATKFSLVCNKCSNTLRLVWVPGVIHPNNARLGILHTLGCVPVDVMPIDCQVSCMECVDEQITSFKGISSMQPMLQFCKVCKNRILVEHQDTEFHLLKQRQSSMGGKVSAKKKQKQNLNITKGLPLPNNGACEHYKKSFRWFRFSCCDRVYPCDECHDADQNHTFEHANRIICGYCAMESFYKKDATCPHCGNMTVKKQTSAYWEGGKGMRDRVRMSRKDPRKYKRKHHGN.

A CHY-type zinc finger spans residues 389 to 457 (PLPNNGACEH…KDATCPHCGN (69 aa)). Positions 396, 398, 410, 411, 417, 420, 421, 427, 437, 440, 452, and 455 each coordinate Zn(2+). Residues 473–483 (GMRDRVRMSRK) show a composition bias toward basic and acidic residues. A disordered region spans residues 473-495 (GMRDRVRMSRKDPRKYKRKHHGN). Residues 484–495 (DPRKYKRKHHGN) show a composition bias toward basic residues.

The protein localises to the cytoplasm. This is an uncharacterized protein from Schizosaccharomyces pombe (strain 972 / ATCC 24843) (Fission yeast).